The primary structure comprises 228 residues: NADH-quinone oxidoreductase subunit C (228 aa).

The protein belongs to the complex I 30 kDa subunit family. As to quaternary structure, NDH-1 is composed of 14 different subunits. Subunits NuoB, C, D, E, F, and G constitute the peripheral sector of the complex.

It localises to the cell membrane. It catalyses the reaction a quinone + NADH + 5 H(+)(in) = a quinol + NAD(+) + 4 H(+)(out). NDH-1 shuttles electrons from NADH, via FMN and iron-sulfur (Fe-S) centers, to quinones in the respiratory chain. The immediate electron acceptor for the enzyme in this species is believed to be a menaquinone. Couples the redox reaction to proton translocation (for every two electrons transferred, four hydrogen ions are translocated across the cytoplasmic membrane), and thus conserves the redox energy in a proton gradient. This chain is NADH-quinone oxidoreductase subunit C, found in Mycobacteroides abscessus (strain ATCC 19977 / DSM 44196 / CCUG 20993 / CIP 104536 / JCM 13569 / NCTC 13031 / TMC 1543 / L948) (Mycobacterium abscessus).